A 422-amino-acid chain; its full sequence is Dihydroorotase (422 aa).

Zn(2+) contacts are provided by H59 and H61. Substrate is bound by residues 61–63 and N93; that span reads HFR. Zn(2+) is bound by residues D150, H177, and H230. N276 lines the substrate pocket. D303 contributes to the Zn(2+) binding site. D303 is a catalytic residue. H307 lines the substrate pocket.

This sequence belongs to the metallo-dependent hydrolases superfamily. DHOase family. Class I DHOase subfamily. Zn(2+) is required as a cofactor.

The catalysed reaction is (S)-dihydroorotate + H2O = N-carbamoyl-L-aspartate + H(+). It participates in pyrimidine metabolism; UMP biosynthesis via de novo pathway; (S)-dihydroorotate from bicarbonate: step 3/3. Functionally, catalyzes the reversible cyclization of carbamoyl aspartate to dihydroorotate. This chain is Dihydroorotase, found in Streptococcus pyogenes serotype M1.